A 172-amino-acid chain; its full sequence is uncharacterized protein (172 aa).

The region spanning 3–171 is the PfpI endopeptidase domain; that stretch reads KKVAIILADE…FNREIVKKLE (169 aa).

It belongs to the peptidase C56 family.

This is an uncharacterized protein from Staphylococcus epidermidis (strain ATCC 35984 / DSM 28319 / BCRC 17069 / CCUG 31568 / BM 3577 / RP62A).